A 253-amino-acid chain; its full sequence is Transposase for insertion sequence element IS904 (253 aa).

In terms of domain architecture, Integrase catalytic spans 90-253; the sequence is KATAPNKVWL…SPKDFEKYNS (164 aa).

It belongs to the transposase IS3/IS150/IS904 family.

Functionally, involved in the transposition of the insertion sequence. This Lactococcus lactis subsp. lactis (strain IL1403) (Streptococcus lactis) protein is Transposase for insertion sequence element IS904 (nisX1).